The primary structure comprises 397 residues: Elongation factor Tu (397 aa).

A tr-type G domain is found at 10–206 (KPHVNIGTIG…AVDDSIPEPQ (197 aa)). A G1 region spans residues 19 to 26 (GHIDHGKT). GTP is bound at residue 19–26 (GHIDHGKT). Thr-26 is a binding site for Mg(2+). The interval 62-66 (GITIS) is G2. The tract at residues 83 to 86 (DCPG) is G3. GTP is bound by residues 83–87 (DCPGH) and 138–141 (NKAD). Residues 138–141 (NKAD) are G4. A G5 region spans residues 176–178 (SAL).

Belongs to the TRAFAC class translation factor GTPase superfamily. Classic translation factor GTPase family. EF-Tu/EF-1A subfamily. In terms of assembly, monomer.

The protein resides in the cytoplasm. The enzyme catalyses GTP + H2O = GDP + phosphate + H(+). Its function is as follows. GTP hydrolase that promotes the GTP-dependent binding of aminoacyl-tRNA to the A-site of ribosomes during protein biosynthesis. The chain is Elongation factor Tu from Frankia alni (strain DSM 45986 / CECT 9034 / ACN14a).